Reading from the N-terminus, the 173-residue chain is Ribosome maturation factor RimM (173 aa).

Residues Glu-93–Met-166 enclose the PRC barrel domain.

This sequence belongs to the RimM family. Binds ribosomal protein uS19.

The protein resides in the cytoplasm. An accessory protein needed during the final step in the assembly of 30S ribosomal subunit, possibly for assembly of the head region. Essential for efficient processing of 16S rRNA. May be needed both before and after RbfA during the maturation of 16S rRNA. It has affinity for free ribosomal 30S subunits but not for 70S ribosomes. The protein is Ribosome maturation factor RimM of Fusobacterium nucleatum subsp. nucleatum (strain ATCC 25586 / DSM 15643 / BCRC 10681 / CIP 101130 / JCM 8532 / KCTC 2640 / LMG 13131 / VPI 4355).